Here is a 675-residue protein sequence, read N- to C-terminus: PTS system glucose-specific EIICBA component (675 aa).

The 412-residue stretch at 3-414 folds into the PTS EIIC type-1 domain; that stretch reads KKLFGQLQRI…FNFKTPGRED (412 aa). Transmembrane regions (helical) follow at residues 16–36, 59–79, 81–101, 126–146, 173–193, 199–219, 273–293, 303–323, 328–348, 355–375, and 378–398; these read LMLPVAILPAAGLLLAIGTAF, MMTGAGGIIFDNLPIIFALGV, IGLAGGDGVAAIAAFVGFIIM, VLGIPTLQTGVFGGIIIGALA, IMMATTSFILAFPMAWIWPFI, AFSTGLLDSNTGLAVFLFGFI, FMQGEFPVMMFGLPAAALAIY, VVGGLMLSAALTSFLTGITEP, FLFVAPLLFFIHAVLDGLSFL, LHLGYTFSGGFIDFVLLGILP, and TPWWLVIPVGLVYAVIYYVVF. One can recognise a PTS EIIB type-1 domain in the interval 425 to 506; that stretch reads SKLPFDVLDA…ARIMNGDITK (82 aa). Cys447 acts as the Phosphocysteine intermediate; for EIIB activity in catalysis. Residues 547–651 enclose the PTS EIIA type-1 domain; sequence DKVFSEKMMG…SVVTPVIITN (105 aa). Catalysis depends on His599, which acts as the Tele-phosphohistidine intermediate; for EIIA activity.

Its subcellular location is the cell membrane. The catalysed reaction is N(pros)-phospho-L-histidyl-[protein] + D-glucose(out) = D-glucose 6-phosphate(in) + L-histidyl-[protein]. Functionally, the phosphoenolpyruvate-dependent sugar phosphotransferase system (sugar PTS), a major carbohydrate active transport system, catalyzes the phosphorylation of incoming sugar substrates concomitantly with their translocation across the cell membrane. This system is involved in glucose transport. The protein is PTS system glucose-specific EIICBA component (ptsG) of Staphylococcus haemolyticus (strain JCSC1435).